Here is a 386-residue protein sequence, read N- to C-terminus: MKHVFPTYKRFPIDLVNGTGTVVTDKNGKTYLDFTSGIAVCNLGHCPANVAEAVQQQLTNIWHTSNLYECALQDSVAELIADGKDRLVFFCNSGTEANEAALKLARKYTGKEKIITFEKSFHGRTFGSMSATAQAKIHQGFGGLVPGFTYVPYNDIEAFRAEIDEHTAAVMLEVIQGEGGVIPANAAFLLEVQLLCKKMGVLLIIDEVQTGLGRTGTLYGFEQIGLEPDIFTLAKGLGNGLPIGAMVGKANLSSAFGPGSHGSTFGGNKLALAAAKEILRTMKQAGFLEEVNAKADYFRYLLEVHLEALDNVSVIRGGGFLIGIELENTAEPVVTELRDKGLLILTAGANVLRILPPLTVSYAEIDQAIYLLKSVLENQLIGSEEG.

Residues 94-95 (GT) and Phe-121 contribute to the pyridoxal 5'-phosphate site. N(2)-acetyl-L-ornithine is bound at residue Arg-124. 206 to 209 (DEVQ) lines the pyridoxal 5'-phosphate pocket. N6-(pyridoxal phosphate)lysine is present on Lys-235. A N(2)-acetyl-L-ornithine-binding site is contributed by Ser-263. Thr-264 contributes to the pyridoxal 5'-phosphate binding site.

The protein belongs to the class-III pyridoxal-phosphate-dependent aminotransferase family. ArgD subfamily. In terms of assembly, homodimer. Pyridoxal 5'-phosphate is required as a cofactor.

It is found in the cytoplasm. The enzyme catalyses N(2)-acetyl-L-ornithine + 2-oxoglutarate = N-acetyl-L-glutamate 5-semialdehyde + L-glutamate. It functions in the pathway amino-acid biosynthesis; L-arginine biosynthesis; N(2)-acetyl-L-ornithine from L-glutamate: step 4/4. The sequence is that of Acetylornithine aminotransferase from Listeria monocytogenes serotype 4b (strain F2365).